We begin with the raw amino-acid sequence, 119 residues long: Putative membrane protein insertion efficiency factor (119 aa).

Positions 82–119 (NALRGEKGGESAADVPSGGSVSEPPGPAAETSPNAQGA) are disordered.

It belongs to the UPF0161 family.

Its subcellular location is the cell membrane. Functionally, could be involved in insertion of integral membrane proteins into the membrane. The chain is Putative membrane protein insertion efficiency factor from Streptomyces griseus subsp. griseus (strain JCM 4626 / CBS 651.72 / NBRC 13350 / KCC S-0626 / ISP 5235).